Here is a 502-residue protein sequence, read N- to C-terminus: 4,4'-diapophytoene desaturase (4,4'-diaponeurosporene-forming) (502 aa).

5-17 is an FAD binding site; the sequence is VIGAGVTGLAAAA.

It belongs to the carotenoid/retinoid oxidoreductase family. CrtN subfamily.

It catalyses the reaction 15-cis-4,4'-diapophytoene + 3 FAD + 3 H(+) = all-trans-4,4'-diaponeurosporene + 3 FADH2. The protein operates within carotenoid biosynthesis; staphyloxanthin biosynthesis; staphyloxanthin from farnesyl diphosphate: step 2/5. Its function is as follows. Involved in the biosynthesis of the yellow-orange carotenoid staphyloxanthin, which plays a role in the virulence via its protective function against oxidative stress. Catalyzes three successive dehydrogenation reactions that lead to the introduction of three double bonds into 4,4'-diapophytoene (dehydrosqualene), with 4,4'-diapophytofluene and 4,4'-diapo-zeta-carotene as intermediates, and 4,4'-diaponeurosporene (the major deep-yellow pigment in staphylococci strains) as the end product. The protein is 4,4'-diapophytoene desaturase (4,4'-diaponeurosporene-forming) of Staphylococcus aureus (strain MW2).